A 591-amino-acid chain; its full sequence is Protein CBFA2T3 (591 aa).

The disordered stretch occupies residues 1–105 (MPGGTPRLEG…SSSASLSTHQ (105 aa)). The segment at 1–381 (MPGGTPRLEG…ADREELNHWI (381 aa)) is mediates localization to the nucleus. The segment covering 41 to 52 (STPPNMPPPPPA) has biased composition (pro residues). The span at 55–105 (QGATRHPSFTPSTMMNGSSHSPTAINGAPSTPNGFSNGPATSSSASLSTHQ) shows a compositional bias: polar residues. Positions 112 to 207 (ARQLSKLKRF…SPAQYLAQHE (96 aa)) constitute a TAFH domain. 2 disordered regions span residues 226–291 (LEVS…PPQH) and 386–420 (DAED…DFAP). Residues 230 to 256 (ESGKRRTPDRTKENGLDRDPLHPEHLS) are compositionally biased toward basic and acidic residues. Residues 263–274 (SPAQRYSPSNGL) show a composition bias toward polar residues. Positions 279-290 (NGLPHPPGPPPQ) are enriched in pro residues. Residues 394–410 (SPPSARPHNSSSSSEAP) are compositionally biased toward low complexity. Positions 433–488 (RKAEEAVNEVKRQAMSELQKAVSDAERKAHELITTERAKMERALAEAKRQASEDAL) form a coiled coil. Zn(2+)-binding residues include cysteine 501, cysteine 504, cysteine 512, cysteine 515, cysteine 521, cysteine 525, histidine 533, and cysteine 537. The segment at 501–537 (CWNCGRKASETCSGCNTARYCGSFCQHKDWEKHHHVC) adopts an MYND-type zinc-finger fold. Positions 548–591 (SVPTAVGQPEAVPPMASSPSDAGSAGASRAGTPGTPAPLESASR) are disordered. Low complexity predominate over residues 560 to 585 (PPMASSPSDAGSAGASRAGTPGTPAP).

The protein belongs to the CBFA2T family.

It is found in the nucleus. It localises to the nucleolus. The protein resides in the nucleoplasm. The protein localises to the golgi apparatus. Functionally, functions as a transcriptional repressor. Regulates the proliferation and the differentiation of erythroid progenitors. Plays a role in granulocyte differentiation. May also function as an A-kinase-anchoring protein. The protein is Protein CBFA2T3 (CBFA2T3) of Gallus gallus (Chicken).